We begin with the raw amino-acid sequence, 339 residues long: Putative methylthioribose-1-phosphate isomerase (339 aa).

Residues 43–45 (RGA), Arg86, and Gln191 each bind substrate. Asp232 (proton donor) is an active-site residue. 241–242 (NK) is a binding site for substrate.

It belongs to the eIF-2B alpha/beta/delta subunits family. MtnA subfamily.

The enzyme catalyses 5-(methylsulfanyl)-alpha-D-ribose 1-phosphate = 5-(methylsulfanyl)-D-ribulose 1-phosphate. In terms of biological role, catalyzes the interconversion of methylthioribose-1-phosphate (MTR-1-P) into methylthioribulose-1-phosphate (MTRu-1-P). The chain is Putative methylthioribose-1-phosphate isomerase from Archaeoglobus fulgidus (strain ATCC 49558 / DSM 4304 / JCM 9628 / NBRC 100126 / VC-16).